Reading from the N-terminus, the 233-residue chain is B-cell lymphoma/leukemia 10 (233 aa).

At methionine 1 the chain carries N-acetylmethionine. The CARD domain occupies 13–101; the sequence is LTEVKKDALE…QNFLIQKITD (89 aa). Residues lysine 17, lysine 31, and lysine 63 each participate in a glycyl lysine isopeptide (Lys-Gly) (interchain with G-Cter in ubiquitin) cross-link. A compositionally biased stretch (polar residues) spans 130–141; it reads TNNLSRSNSDES. 2 disordered regions span residues 130–149 and 186–233; these read TNNLSRSNSDESNFSEKQRP and SFSS…LSRQ. The residue at position 138 (serine 138) is a Phosphoserine. Pro residues predominate over residues 195–205; sequence PGDPGAPPLPP.

As to quaternary structure, homomultimer; homooligomerized following recruitment by CARD domain-containing proteins that form a nucleating helical template that recruits BCL10 via CARD-CARD interaction. Self-associates by CARD-CARD interaction and interacts with other CARD-proteins such as CARD9, CARD10, CARD11 and CARD14. Forms a complex with CARD14 and MALT1; resulting in the formation of a CBM (CARD14-BCL10-MALT1) complex. Forms a complex with CARD11 and MALT1; resulting in the formation of a CBM (CARD11-BCL10-MALT1) complex. Forms a complex with CARD9 and MALT1; resulting in the formation of a CBM (CARD9-BCL10-MALT1) complex. Found in a membrane raft complex, at least composed of BCL10, CARD11, DPP4 and IKBKB. Binds caspase-9 with its C-terminal domain. Interacts with TRAF2 and BIRC2/c-IAP2. Interacts with PELI2 and SOCS3; these interactions may be mutually exclusive. Phosphorylated. Phosphorylation results in dissociation from TRAF2 and binding to BIRC2/c-IAP2. Phosphorylated by IKBKB/IKKB. In terms of processing, ubiquitinated via both 'Lys-63'-linked and linear ('Met-1'-linked) polyubiquitin chains in response to T-cell receptor (TCR) activation. Ubiquitination is recognized by IKBKG/NEMO, the regulatory subunit of I-kappa-B kinase (IKK), and is required for TCR-induced NF-kappa-B activation. Linear ubiquitination at Lys-17, Lys-31 and Lys-63 is mediated by RNF31/HOIP; linear ubiquitination is recognized with much higher affinity than 'Lys-63'-linked ubiquitin by IKBKG/NEMO. CARD11 is required for linear ubiquitination by HOIP by promoting the targeting of BCL10 to RNF31/HOIP. Post-translationally, proteolytically cleaved by MALT1; required for T-cell activation.

Its subcellular location is the cytoplasm. The protein localises to the perinuclear region. It localises to the membrane raft. In terms of biological role, plays a key role in both adaptive and innate immune signaling by bridging CARD domain-containing proteins to immune activation. Acts by channeling adaptive and innate immune signaling downstream of CARD domain-containing proteins CARD9, CARD11 and CARD14 to activate NF-kappa-B and MAP kinase p38 (MAPK11, MAPK12, MAPK13 and/or MAPK14) pathways which stimulate expression of genes encoding pro-inflammatory cytokines and chemokines. Recruited by activated CARD domain-containing proteins: homooligomerized CARD domain-containing proteins form a nucleating helical template that recruits BCL10 via CARD-CARD interaction, thereby promoting polymerization of BCL10, subsequent recruitment of MALT1 and formation of a CBM complex. This leads to activation of NF-kappa-B and MAP kinase p38 (MAPK11, MAPK12, MAPK13 and/or MAPK14) pathways which stimulate expression of genes encoding pro-inflammatory cytokines and chemokines. Activated by CARD9 downstream of C-type lectin receptors; CARD9-mediated signals are essential for antifungal immunity. Activated by CARD11 downstream of T-cell receptor (TCR) and B-cell receptor (BCR). Promotes apoptosis, pro-caspase-9 maturation and activation of NF-kappa-B via NIK and IKK. The polypeptide is B-cell lymphoma/leukemia 10 (Rattus norvegicus (Rat)).